We begin with the raw amino-acid sequence, 300 residues long: Bifunctional protein FolD (300 aa).

NADP(+) contacts are provided by residues 169-171 (GHS) and I235.

This sequence belongs to the tetrahydrofolate dehydrogenase/cyclohydrolase family. Homodimer.

It carries out the reaction (6R)-5,10-methylene-5,6,7,8-tetrahydrofolate + NADP(+) = (6R)-5,10-methenyltetrahydrofolate + NADPH. It catalyses the reaction (6R)-5,10-methenyltetrahydrofolate + H2O = (6R)-10-formyltetrahydrofolate + H(+). It participates in one-carbon metabolism; tetrahydrofolate interconversion. Catalyzes the oxidation of 5,10-methylenetetrahydrofolate to 5,10-methenyltetrahydrofolate and then the hydrolysis of 5,10-methenyltetrahydrofolate to 10-formyltetrahydrofolate. This is Bifunctional protein FolD from Rhodobacter capsulatus (strain ATCC BAA-309 / NBRC 16581 / SB1003).